Reading from the N-terminus, the 426-residue chain is Dihydroorotase (426 aa).

The Zn(2+) site is built by His-58 and His-60. Substrate is bound by residues 60-62 (HLR) and Asn-92. The Zn(2+) site is built by Asp-150, His-177, and His-230. Asn-276 is a substrate binding site. Asp-303 is a Zn(2+) binding site. The active site involves Asp-303. Residues His-307 and 321–322 (FG) contribute to the substrate site.

Belongs to the metallo-dependent hydrolases superfamily. DHOase family. Class I DHOase subfamily. Zn(2+) is required as a cofactor.

The catalysed reaction is (S)-dihydroorotate + H2O = N-carbamoyl-L-aspartate + H(+). It participates in pyrimidine metabolism; UMP biosynthesis via de novo pathway; (S)-dihydroorotate from bicarbonate: step 3/3. Functionally, catalyzes the reversible cyclization of carbamoyl aspartate to dihydroorotate. In Listeria monocytogenes serotype 4a (strain HCC23), this protein is Dihydroorotase.